The sequence spans 269 residues: MFDLTGKNVCYVADCGGIALETCKVLMTKNIAKLAILHSVENPQAIAQLQSLKPSTQIFFWTYDVTMARADMQKYFDEVMVQMDYIDVLIYGATLCDETDIDGTINTNLTGMMNTCATVLPHMDKKKDGSGGLILNVTSVIGLDPSPVFCAYSASKFGVIGFTRSLADPLYYTQNGVAVMAVCCGPTKVFVDRELTAFLPYGQSFADRLRTAPCQSTAVCGQNIVRAIERGENGQIWIADKGGLELVKLQSYWHMADVFLHYMQDKEDD.

Residue 11 to 34 participates in NAD(+) binding; that stretch reads YVADCGGIALETCKVLMTKNIAKL. Serine 139 is a binding site for substrate. Tyrosine 152 acts as the Proton acceptor in catalysis.

It belongs to the short-chain dehydrogenases/reductases (SDR) family.

This is Alcohol dehydrogenase-related 31 kDa protein (Adhr) from Drosophila lebanonensis (Fruit fly).